We begin with the raw amino-acid sequence, 179 residues long: Early E3 20.1 kDa glycoprotein (179 aa).

5 N-linked (GlcNAc...) asparagine; by host glycosylation sites follow: Asn29, Asn57, Asn70, Asn75, and Asn123.

It belongs to the adenoviridae E3_20 family.

Functionally, E3 proteins seem to be dispensable for virus growth in tissue culture cells. They are potentially important for virus growth under special conditions; E3 region may help adenoviruses to evade the immune surveillance of the host. The chain is Early E3 20.1 kDa glycoprotein from Homo sapiens (Human).